We begin with the raw amino-acid sequence, 386 residues long: Succinate--CoA ligase [ADP-forming] subunit beta (386 aa).

The region spanning 9 to 244 is the ATP-grasp domain; it reads KEILKQYGVK…LDEEDEKEIE (236 aa). Residues K46, 53-55, E99, C102, and E107 each bind ATP; that span reads GRG. The Mg(2+) site is built by N199 and D213. Residues N264 and 321–323 each bind substrate; that span reads GIM.

Belongs to the succinate/malate CoA ligase beta subunit family. As to quaternary structure, heterotetramer of two alpha and two beta subunits. Mg(2+) serves as cofactor.

It catalyses the reaction succinate + ATP + CoA = succinyl-CoA + ADP + phosphate. The catalysed reaction is GTP + succinate + CoA = succinyl-CoA + GDP + phosphate. It participates in carbohydrate metabolism; tricarboxylic acid cycle; succinate from succinyl-CoA (ligase route): step 1/1. In terms of biological role, succinyl-CoA synthetase functions in the citric acid cycle (TCA), coupling the hydrolysis of succinyl-CoA to the synthesis of either ATP or GTP and thus represents the only step of substrate-level phosphorylation in the TCA. The beta subunit provides nucleotide specificity of the enzyme and binds the substrate succinate, while the binding sites for coenzyme A and phosphate are found in the alpha subunit. The chain is Succinate--CoA ligase [ADP-forming] subunit beta from Brevibacillus brevis (strain 47 / JCM 6285 / NBRC 100599).